The following is a 102-amino-acid chain: Large ribosomal subunit protein uL24 (102 aa).

Residues 1–22 (MHVKKGDTVQVMSGKDKGKQGV) form a disordered region.

Belongs to the universal ribosomal protein uL24 family. Part of the 50S ribosomal subunit.

Functionally, one of two assembly initiator proteins, it binds directly to the 5'-end of the 23S rRNA, where it nucleates assembly of the 50S subunit. Its function is as follows. One of the proteins that surrounds the polypeptide exit tunnel on the outside of the subunit. In Exiguobacterium sp. (strain ATCC BAA-1283 / AT1b), this protein is Large ribosomal subunit protein uL24.